Consider the following 356-residue polypeptide: DNA polymerase IV (356 aa).

The 181-residue stretch at 6-186 folds into the UmuC domain; it reads IVHIDMDAFY…LPVDAFHGIG (181 aa). The Mg(2+) site is built by aspartate 10 and aspartate 104. Glutamate 105 is a catalytic residue.

It belongs to the DNA polymerase type-Y family. Monomer. Mg(2+) serves as cofactor.

Its subcellular location is the cytoplasm. It catalyses the reaction DNA(n) + a 2'-deoxyribonucleoside 5'-triphosphate = DNA(n+1) + diphosphate. In terms of biological role, poorly processive, error-prone DNA polymerase involved in untargeted mutagenesis. Copies undamaged DNA at stalled replication forks, which arise in vivo from mismatched or misaligned primer ends. These misaligned primers can be extended by PolIV. Exhibits no 3'-5' exonuclease (proofreading) activity. May be involved in translesional synthesis, in conjunction with the beta clamp from PolIII. The polypeptide is DNA polymerase IV (Gluconobacter oxydans (strain 621H) (Gluconobacter suboxydans)).